We begin with the raw amino-acid sequence, 286 residues long: Alpha-ketoglutarate-dependent dioxygenase alkB homolog 3 (286 aa).

The disordered stretch occupies residues 1–46 (MEDKRQRARVQGGWATPTKSQSATQPASPARSRLSQTAGPAWRSKE). The segment covering 17-38 (PTKSQSATQPASPARSRLSQTA) has biased composition (polar residues). Residues tryptophan 115 and 141 to 143 (YTY) contribute to the substrate site. Residues 172-278 (TFNSLLCNFY…RVNLTFRTVY (107 aa)) enclose the Fe2OG dioxygenase domain. Leucine 177 bears the (4R)-5-hydroxyleucine; alternate mark. At leucine 177 the chain carries (4R)-5-oxoleucine; alternate. 179 to 181 (NFY) is a 2-oxoglutarate binding site. Residues histidine 191 and aspartate 193 each contribute to the Fe cation site. Aspartate 194 contributes to the substrate binding site. Fe cation is bound at residue histidine 257. Residues 269–275 (RVNLTFR) and arginine 275 contribute to the 2-oxoglutarate site.

It belongs to the alkB family. In terms of assembly, interacts with the ASCC complex composed of ASCC1, ASCC2 and ASCC3. Interacts directly with ASCC3, and is thereby recruited to the ASCC complex. Interacts with OTUD4; the interaction is direct. Interacts with USP7 and USP9X. The cofactor is Fe(2+). In terms of processing, ubiquitinated; undergoes 'Lys-48'-linked polyubiquitination. OTUD4 promotes USP7 and USP9X-dependent deubiquitination of 'Lys-48'-polyubiquitinated ALKBH3 promoting the repair of alkylated DNA lesions. Detected in testis, kidney, liver and heart.

Its subcellular location is the nucleus. It is found in the cytoplasm. It carries out the reaction an N(1)-methyladenosine in mRNA + 2-oxoglutarate + O2 = an adenosine in mRNA + formaldehyde + succinate + CO2. The catalysed reaction is a methylated nucleobase within DNA + 2-oxoglutarate + O2 = a nucleobase within DNA + formaldehyde + succinate + CO2. The enzyme catalyses an N(1)-methyl-2'-deoxyadenosine in single-stranded DNA + 2-oxoglutarate + O2 = a 2'-deoxyadenosine in single-stranded DNA + formaldehyde + succinate + CO2 + H(+). It catalyses the reaction an N(3)-methyl-2'-deoxycytidine in single-stranded DNA + 2-oxoglutarate + O2 = a 2'-deoxycytidine in single-stranded DNA + formaldehyde + succinate + CO2 + H(+). It carries out the reaction a 3,N(4)-etheno-2'-deoxycytidine in single-stranded DNA + 2-oxoglutarate + O2 + H2O = a 2'-deoxycytidine in single-stranded DNA + glyoxal + succinate + CO2. With respect to regulation, activated by ascorbate. Dioxygenase that mediates demethylation of DNA and RNA containing 1-methyladenosine (m1A). Repairs alkylated DNA containing 1-methyladenosine (m1A) and 3-methylcytosine (m3C) by oxidative demethylation. Has a strong preference for single-stranded DNA. Able to process alkylated m3C within double-stranded regions via its interaction with ASCC3, which promotes DNA unwinding to generate single-stranded substrate needed for ALKBH3. Can repair exocyclic 3,N4-ethenocytosine adducs in single-stranded DNA. Also acts on RNA. Demethylates N(1)-methyladenosine (m1A) RNA, an epigenetic internal modification of messenger RNAs (mRNAs) highly enriched within 5'-untranslated regions (UTRs) and in the vicinity of start codons. Requires molecular oxygen, alpha-ketoglutarate and iron. The chain is Alpha-ketoglutarate-dependent dioxygenase alkB homolog 3 from Mus musculus (Mouse).